The chain runs to 255 residues: Small ribosomal subunit protein uS2 (255 aa).

The disordered stretch occupies residues 226 to 255 (QGVSNEEVAAEQNIDLDEKEKSEETEATEE).

The protein belongs to the universal ribosomal protein uS2 family.

The sequence is that of Small ribosomal subunit protein uS2 from Staphylococcus aureus (strain Mu3 / ATCC 700698).